The following is a 128-amino-acid chain: Protein C10 (128 aa).

It belongs to the UPF0456 family.

It localises to the cytoplasm. The polypeptide is Protein C10 (Xenopus tropicalis (Western clawed frog)).